The sequence spans 316 residues: Ribosomal RNA small subunit methyltransferase H (316 aa).

Residues 35–37, D55, F84, D105, and Q112 contribute to the S-adenosyl-L-methionine site; that span reads AGH.

It belongs to the methyltransferase superfamily. RsmH family.

The protein localises to the cytoplasm. It carries out the reaction cytidine(1402) in 16S rRNA + S-adenosyl-L-methionine = N(4)-methylcytidine(1402) in 16S rRNA + S-adenosyl-L-homocysteine + H(+). Its function is as follows. Specifically methylates the N4 position of cytidine in position 1402 (C1402) of 16S rRNA. In Streptococcus mutans serotype c (strain ATCC 700610 / UA159), this protein is Ribosomal RNA small subunit methyltransferase H.